The chain runs to 269 residues: Eukaryotic translation initiation factor 3 subunit G-1 (269 aa).

The 79-residue stretch at A188–P266 folds into the RRM domain.

This sequence belongs to the eIF-3 subunit G family. In terms of assembly, component of the eukaryotic translation initiation factor 3 (eIF-3) complex. The eIF-3 complex interacts with pix.

The protein resides in the cytoplasm. RNA-binding component of the eukaryotic translation initiation factor 3 (eIF-3) complex, which is involved in protein synthesis of a specialized repertoire of mRNAs and, together with other initiation factors, stimulates binding of mRNA and methionyl-tRNAi to the 40S ribosome. The eIF-3 complex specifically targets and initiates translation of a subset of mRNAs involved in cell proliferation. This subunit can bind 18S rRNA. This Drosophila virilis (Fruit fly) protein is Eukaryotic translation initiation factor 3 subunit G-1.